Consider the following 633-residue polypeptide: Pollen receptor-like kinase 3 (633 aa).

An N-terminal signal peptide occupies residues 1–19 (MTAVLFLCFLLICFSFTPS). N-linked (GlcNAc...) asparagine glycans are attached at residues asparagine 22 and asparagine 37. Cysteine 53 and cysteine 62 are disulfide-bonded. 5 LRR repeats span residues 90 to 115 (LPNLRTIRLDNNLLSGPLPPFFKLPG), 117 to 137 (KSLLLSNNSFSGEIADDFFKE), 138 to 162 (TPQLKRVFLDNNRLSGKIPASLMQL), 163 to 186 (AGLEELHMQGNQFTGEIPPLTDGN), and 188 to 210 (VLKSLDLSNNDLEGEIPITISDR). An N-linked (GlcNAc...) asparagine glycan is attached at asparagine 123. A disulfide bond links cysteine 224 and cysteine 232. A glycan (N-linked (GlcNAc...) asparagine) is linked at asparagine 246. A helical membrane pass occupies residues 249-269 (AKAIFMVILFLLIFLFVVAII). A compositionally biased stretch (basic and acidic residues) spans 294-314 (VEVRVPDSIKKPIDSSKKRSN). Residues 294-339 (VEVRVPDSIKKPIDSSKKRSNAEGSSKKGSSHNGKGAGGGPGSGMG) are disordered. Residues 328–338 (KGAGGGPGSGM) show a composition bias toward gly residues. The 276-residue stretch at 358 to 633 (KAAAEVLGNG…IVRRIERVTL (276 aa)) folds into the Protein kinase domain. Residues 364–372 (LGNGSLGSA) and lysine 386 contribute to the ATP site. At serine 438 the chain carries Phosphoserine. The residue at position 458 (threonine 458) is a Phosphothreonine. Serine 535 is modified (phosphoserine).

This sequence belongs to the protein kinase superfamily. Ser/Thr protein kinase family. Interacts in vitro with ROPGEF1 (via PRONE domain). Interacts with PRK6. As to expression, expressed in pollen and/or in flowers, but not in leaves.

Its subcellular location is the membrane. The enzyme catalyses L-seryl-[protein] + ATP = O-phospho-L-seryl-[protein] + ADP + H(+). The catalysed reaction is L-threonyl-[protein] + ATP = O-phospho-L-threonyl-[protein] + ADP + H(+). The phosphorylation activity is calcium-independent. In terms of biological role, receptor-like kinase involved in the control of pollen germination and pollen tube polar growth. Can phosphorylate ROPGEF1 in vitro. The chain is Pollen receptor-like kinase 3 from Arabidopsis thaliana (Mouse-ear cress).